A 120-amino-acid chain; its full sequence is Small ribosomal subunit protein bS6 (120 aa).

The segment covering 97 to 112 (SNEPSPILKNQSTENT) has biased composition (polar residues). The interval 97-120 (SNEPSPILKNQSTENTPVIDVTAN) is disordered.

Belongs to the bacterial ribosomal protein bS6 family.

Binds together with bS18 to 16S ribosomal RNA. The sequence is that of Small ribosomal subunit protein bS6 from Rickettsia bellii (strain RML369-C).